The following is a 63-amino-acid chain: MSEKNMEKAGVVKADELDEMIDETTGGASTVNTVGIHTTYLISKGLQNCPLKPTTILPILPRK.

Positions 1-28 are cleaved as a propeptide — cleaved by FlvT; sequence MSEKNMEKAGVVKADELDEMIDETTGGA. 4 positions are modified to 2,3-didehydrobutyrine; by FlvM2: Thr30, Thr33, Thr38, and Thr39. The lanthionine (Ser-Cys); by FlvM2 cross-link spans 43–49; sequence SKGLQNC. A 2,3-didehydrobutyrine; by FlvM2 mark is found at Thr54 and Thr55.

In terms of processing, maturation of FlvA2 peptides involves the enzymatic conversion of Thr, and Ser into dehydrated AA and the formation of thioether bonds with cysteines. Modifications are processed by the flavecin synthetase FlvM2. This is followed by membrane translocation and cleavage of the modified precursor. Contains DL-lanthionine, when coepressed in E.coli with the flavecin synthetase FlvM2.

Its subcellular location is the secreted. Its function is as follows. Lanthionine-containing peptide that does probably not show antibacterial activity, since its analog [+3]Flvbeta.a does not show antibacterial activity against M.luteus. Also does not show antibiotic activity when tested with [Del2]Flvalpha.a, an analog of Flvalpha.a, which is encoded by the same operon than Flvbeta.a. The bactericidal activity of lantibiotics is based on depolarization of energized bacterial cytoplasmic membranes, initiated by the formation of aqueous transmembrane pores. This Ruminococcus flavefaciens protein is Lantipeptide Flvbeta.a.